Consider the following 354-residue polypeptide: Uroporphyrinogen decarboxylase (354 aa).

Substrate-binding positions include 27-31, aspartate 77, tyrosine 154, threonine 209, and histidine 327; that span reads RQAGR.

It belongs to the uroporphyrinogen decarboxylase family. In terms of assembly, homodimer.

It is found in the cytoplasm. It catalyses the reaction uroporphyrinogen III + 4 H(+) = coproporphyrinogen III + 4 CO2. Its pathway is porphyrin-containing compound metabolism; protoporphyrin-IX biosynthesis; coproporphyrinogen-III from 5-aminolevulinate: step 4/4. Catalyzes the decarboxylation of four acetate groups of uroporphyrinogen-III to yield coproporphyrinogen-III. This Citrobacter koseri (strain ATCC BAA-895 / CDC 4225-83 / SGSC4696) protein is Uroporphyrinogen decarboxylase.